Reading from the N-terminus, the 290-residue chain is ATP synthase gamma chain (290 aa).

It belongs to the ATPase gamma chain family. As to quaternary structure, F-type ATPases have 2 components, CF(1) - the catalytic core - and CF(0) - the membrane proton channel. CF(1) has five subunits: alpha(3), beta(3), gamma(1), delta(1), epsilon(1). CF(0) has three main subunits: a, b and c.

The protein localises to the cell membrane. Functionally, produces ATP from ADP in the presence of a proton gradient across the membrane. The gamma chain is believed to be important in regulating ATPase activity and the flow of protons through the CF(0) complex. The sequence is that of ATP synthase gamma chain from Wolbachia sp. subsp. Brugia malayi (strain TRS).